Consider the following 412-residue polypeptide: Inositol polyphosphate-5-phosphatase A (412 aa).

Cys409 is lipidated: S-farnesyl cysteine. The propeptide at 410–412 is removed in mature form; that stretch reads VVQ.

Belongs to the inositol 1,4,5-trisphosphate 5-phosphatase type I family. As to quaternary structure, interacts with TASOR. Isoprenylation at Cys-409 is required for localization at the membrane.

Its subcellular location is the cell membrane. The protein resides in the cell projection. It is found in the dendrite. It carries out the reaction 1D-myo-inositol 1,4,5-trisphosphate + H2O = 1D-myo-inositol 1,4-bisphosphate + phosphate. The catalysed reaction is 1D-myo-inositol 1,3,4,5-tetrakisphosphate + H2O = 1D-myo-inositol 1,3,4-trisphosphate + phosphate. With respect to regulation, inhibited by EDTA and 2,3-bisphosphoglycerate. Functionally, phosphatase that specifically hydrolyzes the 5-phosphate of inositol 1,4,5-trisphosphate to inositol 1,4-bisphosphate, and inositol 1,3,4,5-tetrasphosphate to inositol 1,3,4-trisphosphate. Plays a crucial role in the survival of cerebellar Purkinje cells. This chain is Inositol polyphosphate-5-phosphatase A (INPP5A), found in Canis lupus familiaris (Dog).